The following is a 142-amino-acid chain: Large ribosomal subunit protein uL11 (142 aa).

This sequence belongs to the universal ribosomal protein uL11 family. As to quaternary structure, part of the ribosomal stalk of the 50S ribosomal subunit. Interacts with L10 and the large rRNA to form the base of the stalk. L10 forms an elongated spine to which L12 dimers bind in a sequential fashion forming a multimeric L10(L12)X complex. In terms of processing, one or more lysine residues are methylated.

Forms part of the ribosomal stalk which helps the ribosome interact with GTP-bound translation factors. This Serratia proteamaculans (strain 568) protein is Large ribosomal subunit protein uL11.